Reading from the N-terminus, the 399-residue chain is Coenzyme A biosynthesis bifunctional protein CoaBC (399 aa).

The interval 1–190 (MQTLAGKKIL…FQPKVLEGKS (190 aa)) is phosphopantothenoylcysteine decarboxylase. C159 serves as the catalytic Proton donor. A phosphopantothenate--cysteine ligase region spans residues 191 to 399 (ILISAGPTRE…KILEKMRELM (209 aa)). Residues D279, K289, 307 to 310 (PDIV), F326, K340, and K344 each bind CTP.

The protein in the N-terminal section; belongs to the HFCD (homo-oligomeric flavin containing Cys decarboxylase) superfamily. In the C-terminal section; belongs to the PPC synthetase family. Mg(2+) is required as a cofactor. Requires FMN as cofactor.

It catalyses the reaction N-[(R)-4-phosphopantothenoyl]-L-cysteine + H(+) = (R)-4'-phosphopantetheine + CO2. The catalysed reaction is (R)-4'-phosphopantothenate + L-cysteine + CTP = N-[(R)-4-phosphopantothenoyl]-L-cysteine + CMP + diphosphate + H(+). It participates in cofactor biosynthesis; coenzyme A biosynthesis; CoA from (R)-pantothenate: step 2/5. The protein operates within cofactor biosynthesis; coenzyme A biosynthesis; CoA from (R)-pantothenate: step 3/5. Functionally, catalyzes two sequential steps in the biosynthesis of coenzyme A. In the first step cysteine is conjugated to 4'-phosphopantothenate to form 4-phosphopantothenoylcysteine. In the second step the latter compound is decarboxylated to form 4'-phosphopantotheine. The sequence is that of Coenzyme A biosynthesis bifunctional protein CoaBC from Vibrio parahaemolyticus serotype O3:K6 (strain RIMD 2210633).